The primary structure comprises 405 residues: 4-hydroxy-3-methylbut-2-en-1-yl diphosphate synthase (flavodoxin) (405 aa).

Residues cysteine 297, cysteine 300, cysteine 343, and glutamate 350 each coordinate [4Fe-4S] cluster.

The protein belongs to the IspG family. The cofactor is [4Fe-4S] cluster.

The catalysed reaction is (2E)-4-hydroxy-3-methylbut-2-enyl diphosphate + oxidized [flavodoxin] + H2O + 2 H(+) = 2-C-methyl-D-erythritol 2,4-cyclic diphosphate + reduced [flavodoxin]. Its pathway is isoprenoid biosynthesis; isopentenyl diphosphate biosynthesis via DXP pathway; isopentenyl diphosphate from 1-deoxy-D-xylulose 5-phosphate: step 5/6. Converts 2C-methyl-D-erythritol 2,4-cyclodiphosphate (ME-2,4cPP) into 1-hydroxy-2-methyl-2-(E)-butenyl 4-diphosphate. This Francisella tularensis subsp. mediasiatica (strain FSC147) protein is 4-hydroxy-3-methylbut-2-en-1-yl diphosphate synthase (flavodoxin).